The following is a 1706-amino-acid chain: DDT domain-containing protein PTM (1706 aa).

Positions 1 to 16 are enriched in basic residues; it reads MEAKVPRPRGRPRKRQ. Disordered stretches follow at residues 1–27 and 144–168; these read MEAKVPRPRGRPRKRQRLEDDNRKLNN and VTNSEDGDSYSDSESSESGDKRGSD. The Nuclear localization signal signature appears at 9-18; the sequence is RGRPRKRQRL. Residues 148–160 show a composition bias toward acidic residues; that stretch reads EDGDSYSDSESSE. Positions 192–252 constitute a DDT domain; it reads EEAVAHLLSV…LRALKGHLER (61 aa). A compositionally biased stretch (basic and acidic residues) spans 375–393; sequence YKEKEVTDSSTNESKDLDS. Residues 375-408 form a disordered region; it reads YKEKEVTDSSTNESKDLDSRCTNGGSNEVSSDLD. Residues 394–408 show a composition bias toward polar residues; that stretch reads RCTNGGSNEVSSDLD. A PHD-type 1 zinc finger spans residues 411 to 458; it reads SDECRICGMDGTLLCCDGCPLAYHSRCIGVVKMYIPDGPWFCPECTIN. Disordered stretches follow at residues 1165–1194 and 1311–1345; these read KPPSQQLSSQKPRENTSGVKQVTPDSSVSK and TNQKQRQGNSGLDSDSERMSEQKDSKPSTPLPATP. Composition is skewed to polar residues over residues 1167–1194 and 1311–1323; these read PSQQLSSQKPRENTSGVKQVTPDSSVSK and TNQKQRQGNSGLD. The segment covering 1325-1336 has biased composition (basic and acidic residues); it reads DSERMSEQKDSK. A run of 5 helical transmembrane segments spans residues 1539 to 1559, 1569 to 1589, 1596 to 1616, 1624 to 1644, and 1682 to 1702; these read ALGSITLGSFGAITQFKSILP, LAGPFAGAALSVSMFAVGLFL, ANDLVQVPSMLFQGSLLLGLI, AALHAATVSIHPLVIAGWCGL, and MLGLRVLGGPLALPWGLYVLI.

As to quaternary structure, interacts (via the DDT domain) with CHR11 (via C-terminus).

The protein localises to the plastid. It localises to the chloroplast outer membrane. The protein resides in the nucleus. Membrane-bound transcription factor required for the plastid-to-nucleus retrograde signaling. Functions in multiple retrograde pathways. The plastid-to-nucleus signal plays an important role in the coordinated expression of both nuclear- and chloroplast-localized genes that encode photosynthesis-related proteins. In the nucleus, activates ABI4 transcription in a PHD-dependent manner associated with histone modifications. Localized primarily in the chloroplast outer membrane as dormant form and, in response to retrograde signals, is released from the membrane through proteolytic cleavage and its cleaved fragment containing the transcription factor domain is redistributed to the nucleus, where it regulates the expression of particular nuclear genes. The polypeptide is DDT domain-containing protein PTM (Arabidopsis thaliana (Mouse-ear cress)).